Consider the following 365-residue polypeptide: Zinc finger TRAF-type-containing protein 1-B (365 aa).

Residues 1-56 form a disordered region; that stretch reads MSEEREAPGPLASSSAGLGAEVGQEEVPGGAGPARLLLLPSDSDGPPKKRLRSEAE. The segment at 72–117 adopts an RING-type; degenerate zinc-finger fold; the sequence is CAVCLDLPKASVYQCTNGHLMCAGCFIHLLADARLKEEQATCPNCR. The segment at 113–186 adopts a TRAF-type zinc-finger fold; that stretch reads CPNCRCEISK…PWQGPYHELT (74 aa).

The protein belongs to the ZFTRAF1 family. As to quaternary structure, interacts with LGALS3.

It localises to the cytoplasm. The polypeptide is Zinc finger TRAF-type-containing protein 1-B (Xenopus laevis (African clawed frog)).